Consider the following 863-residue polypeptide: MPKKNSPLLPKETTTTQSSVDTSGSSNLTWPVSEHSIRRPLWARLLGQMLDPWLDLSIEPEHSVQYNDGRPIIYVLEDYGLCNTLILDKACRKTKLPSPLIPLPDNPLQRKRAYLALSRRSSSNSLIPNQRGGKTHSDSLANLLQAHRIRDTLDVHLVPVSIFIGRTPDRQSGWFAVLFSENWALVGRFRRLLAVLLNGRNTIVCFAPPISVRQTLNEGLPPERTLRKLQRVLRTHFRRIRETVIGPDLSTRRLLVDNVLATEAVREAIAAQAKRDGTDLSETWRKAQAYAWEIAADYSSPVIRSADFLFSHVWNRIYAGVLIHHVDSFKETAPGHEVVYVPSHRSHIDYMLLSYCLYQCGIVLPHIVAGINLNLPIVGTLLRKCGAFFIRRSIKGNMLYSIVLSEYVAQLVAGGYSLEYFIEGGRSRTGRLLQPKGGMIMMTLQAFLRQPRRPVLFQPIYIGYEKLIEGTSYLDELSGEPKKKESIWRLFWNIPKVLKQKYGQVVVNFGEPIALNDVLAELAPEWEGQALNENEKPAWLSSTVNHLARQIQTRINSAADVNPINLLALALLSTPKHAMGEADLIAQITLCKKILLELPYSNRVTVTPHTPERIIAHAEQINILTRVHHPLGDVLRVDGDNAVLLSYFRNNVLHLFTASAWVACCFKNNRRMSRIALIRLGVGMYPFLQAELFLPWTEDQFAQHIQQVIELFVREGLLLSAGNEEEDPLTRNTSQTDEVFRLRAISHSLQQAFERYYITISILVKNGPGTLSASELESLCQLAAQRLSLLYASTAPEFFDKGLFRGFIQKLRELNLVWPDTYSKLLFDERLDTSAKDAQVILGRELRHTIERISPEATKPAPK.

Residues 1 to 29 (MPKKNSPLLPKETTTTQSSVDTSGSSNLT) form a disordered region. Polar residues predominate over residues 12–29 (ETTTTQSSVDTSGSSNLT). An HXXXXD motif motif is present at residues 343–348 (SHRSHI).

It belongs to the GPAT/DAPAT family.

The protein resides in the cell inner membrane. It carries out the reaction sn-glycerol 3-phosphate + an acyl-CoA = a 1-acyl-sn-glycero-3-phosphate + CoA. It participates in phospholipid metabolism; CDP-diacylglycerol biosynthesis; CDP-diacylglycerol from sn-glycerol 3-phosphate: step 1/3. This chain is Glycerol-3-phosphate acyltransferase, found in Xylella fastidiosa (strain M12).